Reading from the N-terminus, the 365-residue chain is SWR1 complex subunit 2 (365 aa).

Disordered stretches follow at residues 43–83 (ALKE…NEKE) and 95–147 (PGKT…EGEK). The span at 48–74 (EHDDEYEAEREVADEFDSDFNDDEPEP) shows a compositional bias: acidic residues. The span at 99–108 (ASKKKKKKTK) shows a compositional bias: basic residues. Residues 118-132 (GDEKPGEELGNKEQE) show a composition bias toward basic and acidic residues. 2 coiled-coil regions span residues 123-150 (GEELGNKEQEEKEENEAQEDMEGEKVIR) and 184-225 (GEEK…KAIV). Residues 133-144 (EKEENEAQEDME) show a composition bias toward acidic residues. The tract at residues 333–365 (RTKIPKSNKSFSLRSSARFLSSESEEESEEDSD) is disordered. Positions 342 to 354 (SFSLRSSARFLSS) are enriched in low complexity. Over residues 355–365 (ESEEESEEDSD) the composition is skewed to acidic residues.

This sequence belongs to the VPS72/YL1 family. As to quaternary structure, component of the SWR1 chromatin-remodeling complex composed of at least ARP6/ESD1/SUF3, PIE1, SWC6, SWC2 and H2AZs (HTA8, HTA9, HTA11). Interacts directly with SWC6 and H2AZs, but not with ARP6.

Its function is as follows. Component of the SWR1 complex which mediates the ATP-dependent exchange of histone H2A for the H2A variant H2A.F/Z leading to transcriptional regulation of selected genes (e.g. FLC) by chromatin remodeling. In Arabidopsis thaliana (Mouse-ear cress), this protein is SWR1 complex subunit 2 (SWC2).